Reading from the N-terminus, the 104-residue chain is Flagellar hook-basal body complex protein FliE (104 aa).

It belongs to the FliE family.

The protein localises to the bacterial flagellum basal body. This Salmonella heidelberg (strain SL476) protein is Flagellar hook-basal body complex protein FliE.